Here is a 555-residue protein sequence, read N- to C-terminus: Embryonic protein DC-8 (555 aa).

Basic and acidic residues predominate over residues 83–115 (RENTDYAYDKGREGGDVAAQKAEEAKEKAKMAK). Disordered regions lie at residues 83–118 (RENT…KDTT) and 132–151 (KAEE…KEKA). Tandem repeats lie at residues 97–114 (GDVA…AKMA), 115–125 (KDTTMGKAGEY), 126–140 (KDYT…KEKA), 141–154 (AQKA…AGEY), 155–176 (KNYT…AGEY), 177–191 (KDYA…KDTT), 192–205 (AQKA…TGEY), 206–216 (KDYAAQKAAEA), 217–237 (KVLA…DGEY), 238–259 (KDYA…TGEY), 260–281 (KDYA…AKEY), 282–303 (KEYA…TGEY), 304–325 (KDYS…TKEY), 326–343 (KDYT…TMEK), 344–358 (AKEA…TGEY), 359–376 (KDYA…TVEK), and 377–391 (AKEG…MTEL). A 17 X approximate tandem repeats region spans residues 97-391 (GDVAAQKAEE…DTTVGKMTEL (295 aa)). The interval 184–204 (AAEAKDTTAQKAAEAKEKTGE) is disordered. Over residues 444–465 (LQEEGVKDEAKQRAEADRETAG) the composition is skewed to basic and acidic residues. The tract at residues 444–472 (LQEEGVKDEAKQRAEADRETAGDRGSAAK) is disordered.

It belongs to the LEA type 4 family.

It is found in the cytoplasm. The protein localises to the secreted. Its subcellular location is the cell wall. Functionally, may play a role in late embryogeny. This Daucus carota (Wild carrot) protein is Embryonic protein DC-8.